The primary structure comprises 549 residues: CTP synthase (549 aa).

The segment at 1 to 272 (MPPKSTTTKH…DAYVVRKLDL (272 aa)) is amidoligase domain. Ser19 is a binding site for CTP. Ser19 is a UTP binding site. ATP-binding positions include 20–25 (SLGKGL) and Asp77. Positions 77 and 146 each coordinate Mg(2+). CTP is bound by residues 153 to 155 (DIE), 193 to 198 (KTKPTQ), and Lys229. UTP-binding positions include 193-198 (KTKPTQ) and Lys229. The Glutamine amidotransferase type-1 domain occupies 297-548 (NLALVGKYID…VKAAVERKTG (252 aa)). Gly360 serves as a coordination point for L-glutamine. The active-site Nucleophile; for glutamine hydrolysis is the Cys387. Residues 388–391 (LGLQ), Glu411, and Arg473 contribute to the L-glutamine site. Catalysis depends on residues His521 and Glu523.

This sequence belongs to the CTP synthase family. As to quaternary structure, homotetramer.

It carries out the reaction UTP + L-glutamine + ATP + H2O = CTP + L-glutamate + ADP + phosphate + 2 H(+). The enzyme catalyses L-glutamine + H2O = L-glutamate + NH4(+). It catalyses the reaction UTP + NH4(+) + ATP = CTP + ADP + phosphate + 2 H(+). The protein operates within pyrimidine metabolism; CTP biosynthesis via de novo pathway; CTP from UDP: step 2/2. Its activity is regulated as follows. Allosterically activated by GTP, when glutamine is the substrate; GTP has no effect on the reaction when ammonia is the substrate. The allosteric effector GTP functions by stabilizing the protein conformation that binds the tetrahedral intermediate(s) formed during glutamine hydrolysis. Inhibited by the product CTP, via allosteric rather than competitive inhibition. Catalyzes the ATP-dependent amination of UTP to CTP with either L-glutamine or ammonia as the source of nitrogen. Regulates intracellular CTP levels through interactions with the four ribonucleotide triphosphates. This chain is CTP synthase, found in Streptomyces avermitilis (strain ATCC 31267 / DSM 46492 / JCM 5070 / NBRC 14893 / NCIMB 12804 / NRRL 8165 / MA-4680).